A 194-amino-acid polypeptide reads, in one-letter code: MSSYMEAAAAARAAEAKTEGLLRGACALLAAAAALLVGLNTQTETVLFIRKKATVKDVQALWVLAMAAAAAAGYHLLQLLRCFYLSRFADGKPCRHRRAIAWLCFLLDKGCAYITFATTVAAAQACVVALYGTHALQWTKLCNIYTRFCEQVAGSLVCAMLAAVGTALLSVVSARNLFRLYPSMLSPPPSSFVG.

At 1 to 18 (MSSYMEAAAAARAAEAKT) the chain is on the cytoplasmic side. Residues 19-39 (EGLLRGACALLAAAAALLVGL) form a helical membrane-spanning segment. Residues 40 to 59 (NTQTETVLFIRKKATVKDVQ) are Extracellular-facing. The chain crosses the membrane as a helical span at residues 60-80 (ALWVLAMAAAAAAGYHLLQLL). Over 81-109 (RCFYLSRFADGKPCRHRRAIAWLCFLLDK) the chain is Cytoplasmic. Residues 110–130 (GCAYITFATTVAAAQACVVAL) form a helical membrane-spanning segment. At 131–151 (YGTHALQWTKLCNIYTRFCEQ) the chain is on the extracellular side. A helical transmembrane segment spans residues 152–172 (VAGSLVCAMLAAVGTALLSVV). Residues 173–194 (SARNLFRLYPSMLSPPPSSFVG) are Cytoplasmic-facing.

Belongs to the Casparian strip membrane proteins (CASP) family. As to quaternary structure, homodimer and heterodimers.

The protein localises to the cell membrane. This chain is CASP-like protein 2C1, found in Oryza sativa subsp. japonica (Rice).